Reading from the N-terminus, the 337-residue chain is Histidine N-acetyltransferase (337 aa).

The propeptide at M1–K2 is removed in mature form. One can recognise an N-acetyltransferase domain in the interval L21–E157.

Expressed exclusively in the brain and lens.

It carries out the reaction L-histidine + acetyl-CoA = N(alpha)-acetyl-L-histidine + CoA + H(+). Its function is as follows. Enzyme responsible for the N-acetyl-histidine (NAH) synthesis, which is a major constituent of brain and lens of ectothermic vertebrates. This chain is Histidine N-acetyltransferase (hisat), found in Oreochromis niloticus (Nile tilapia).